The following is a 152-amino-acid chain: SsrA-binding protein (152 aa).

The protein belongs to the SmpB family.

Its subcellular location is the cytoplasm. Required for rescue of stalled ribosomes mediated by trans-translation. Binds to transfer-messenger RNA (tmRNA), required for stable association of tmRNA with ribosomes. tmRNA and SmpB together mimic tRNA shape, replacing the anticodon stem-loop with SmpB. tmRNA is encoded by the ssrA gene; the 2 termini fold to resemble tRNA(Ala) and it encodes a 'tag peptide', a short internal open reading frame. During trans-translation Ala-aminoacylated tmRNA acts like a tRNA, entering the A-site of stalled ribosomes, displacing the stalled mRNA. The ribosome then switches to translate the ORF on the tmRNA; the nascent peptide is terminated with the 'tag peptide' encoded by the tmRNA and targeted for degradation. The ribosome is freed to recommence translation, which seems to be the essential function of trans-translation. The protein is SsrA-binding protein of Persephonella marina (strain DSM 14350 / EX-H1).